Here is a 623-residue protein sequence, read N- to C-terminus: Glutamyl-tRNA(Gln) amidotransferase subunit E (623 aa).

This sequence belongs to the GatB/GatE family. GatE subfamily. As to quaternary structure, heterodimer of GatD and GatE.

The catalysed reaction is L-glutamyl-tRNA(Gln) + L-glutamine + ATP + H2O = L-glutaminyl-tRNA(Gln) + L-glutamate + ADP + phosphate + H(+). In terms of biological role, allows the formation of correctly charged Gln-tRNA(Gln) through the transamidation of misacylated Glu-tRNA(Gln) in organisms which lack glutaminyl-tRNA synthetase. The reaction takes place in the presence of glutamine and ATP through an activated gamma-phospho-Glu-tRNA(Gln). The GatDE system is specific for glutamate and does not act on aspartate. The protein is Glutamyl-tRNA(Gln) amidotransferase subunit E of Haloarcula marismortui (strain ATCC 43049 / DSM 3752 / JCM 8966 / VKM B-1809) (Halobacterium marismortui).